Here is a 317-residue protein sequence, read N- to C-terminus: Pinoresinol reductase 1 (317 aa).

NADP(+) is bound by residues Thr18, Tyr20, Ile21, Arg41, Lys50, Ser90, Gly91, Arg95, Asn98, Ser121, and Glu122. Met125 provides a ligand contact to (-)-pinoresinol. Positions 144 and 166 each coordinate NADP(+). Lys144 acts as the Proton acceptor in catalysis. The (-)-pinoresinol site is built by Met177 and Val178.

This sequence belongs to the NmrA-type oxidoreductase family. Isoflavone reductase subfamily. In terms of assembly, forms homodimers. In terms of tissue distribution, expressed in roots and stems.

It carries out the reaction (-)-lariciresinol + NADP(+) = (-)-pinoresinol + NADPH + H(+). It catalyses the reaction (+)-lariciresinol + NADP(+) = (+)-pinoresinol + NADPH + H(+). In terms of biological role, reductase involved in lignan biosynthesis. Involved in secondary cell wall biosynthesis in fiber cells. Unlike conventional pinoresinol reductases that can reduce both pinoresinol and lariciresinol, PRR1 shows a strict substrate preference toward pinoresinol. Active on both (+) and (-)-pinoresinol. Abstracts the 4R-hydride from the NADPH cofactor during catalysis. This Arabidopsis thaliana (Mouse-ear cress) protein is Pinoresinol reductase 1.